Reading from the N-terminus, the 102-residue chain is MIHKLTSEERKTRLEGLPLWTAVPGRDAIQRSLRFADFNEAFGFMTRVAIKAQEMNHHPEWFNVYNRVDITLSTHDADGLTERDIELALFIDRAGAHAQPAA.

Belongs to the pterin-4-alpha-carbinolamine dehydratase family.

The catalysed reaction is (4aS,6R)-4a-hydroxy-L-erythro-5,6,7,8-tetrahydrobiopterin = (6R)-L-erythro-6,7-dihydrobiopterin + H2O. The protein is Putative pterin-4-alpha-carbinolamine dehydratase of Burkholderia lata (strain ATCC 17760 / DSM 23089 / LMG 22485 / NCIMB 9086 / R18194 / 383).